The sequence spans 201 residues: uncharacterized protein (201 aa).

In terms of assembly, interacts with the chaperones HSP82 and HSC82.

This is an uncharacterized protein from Saccharomyces cerevisiae (strain ATCC 204508 / S288c) (Baker's yeast).